Here is a 337-residue protein sequence, read N- to C-terminus: Dihydroorotate dehydrogenase (quinone) (337 aa).

FMN-binding positions include 62–66 (AGLDK) and threonine 86. Residue lysine 66 participates in substrate binding. 111-115 (NRFGF) contributes to the substrate binding site. Asparagine 139 and asparagine 172 together coordinate FMN. Asparagine 172 serves as a coordination point for substrate. Serine 175 (nucleophile) is an active-site residue. Substrate is bound at residue asparagine 177. FMN contacts are provided by lysine 217 and threonine 245. 246-247 (NT) contacts substrate. Residues glycine 268, glycine 297, and 318–319 (YS) each bind FMN.

This sequence belongs to the dihydroorotate dehydrogenase family. Type 2 subfamily. As to quaternary structure, monomer. FMN is required as a cofactor.

It localises to the cell membrane. The catalysed reaction is (S)-dihydroorotate + a quinone = orotate + a quinol. It functions in the pathway pyrimidine metabolism; UMP biosynthesis via de novo pathway; orotate from (S)-dihydroorotate (quinone route): step 1/1. In terms of biological role, catalyzes the conversion of dihydroorotate to orotate with quinone as electron acceptor. The sequence is that of Dihydroorotate dehydrogenase (quinone) from Methylobacillus flagellatus (strain ATCC 51484 / DSM 6875 / VKM B-1610 / KT).